A 1155-amino-acid polypeptide reads, in one-letter code: RHO1 GDP-GTP exchange protein 1 (1155 aa).

Residue methionine 1 is modified to N-acetylmethionine. A compositionally biased stretch (polar residues) spans 100–143; that stretch reads NSSPQSFTGDQISPTNKKISINDSTRQDKGNSCTTTSSPSQKRS. A disordered region spans residues 100 to 249; that stretch reads NSSPQSFTGD…HSRSKSSPVS (150 aa). Phosphoserine is present on residues serine 154 and serine 155. The span at 155-167 shows a compositional bias: low complexity; that stretch reads SPSLLSFSKNSGS. Threonine 180 is subject to Phosphothreonine. Low complexity predominate over residues 190 to 227; it reads LHSSFNGKHSSSSTSSLFALESLKTQNRRSSNSSNHSS. Positions 228-243 are enriched in basic residues; it reads QYRRHTNQHQRHHSRS. Serine 433 bears the Phosphoserine mark. Positions 464 to 651 constitute a DH domain; it reads KRQEAIYELF…KDLMKRIDRA (188 aa). The region spanning 842 to 1137 is the CNH domain; the sequence is TNRVNDVLIC…RMLKSYAKKI (296 aa).

Stimulates the exchange of RHO1 GDP-bound form into GTP-bound form. This chain is RHO1 GDP-GTP exchange protein 1 (ROM1), found in Saccharomyces cerevisiae (strain ATCC 204508 / S288c) (Baker's yeast).